A 301-amino-acid chain; its full sequence is Acetylglutamate kinase (301 aa).

Residues Gly68–Gly69, Arg90, and Asn197 each bind substrate.

It belongs to the acetylglutamate kinase family. ArgB subfamily.

Its subcellular location is the cytoplasm. The enzyme catalyses N-acetyl-L-glutamate + ATP = N-acetyl-L-glutamyl 5-phosphate + ADP. It functions in the pathway amino-acid biosynthesis; L-arginine biosynthesis; N(2)-acetyl-L-ornithine from L-glutamate: step 2/4. Functionally, catalyzes the ATP-dependent phosphorylation of N-acetyl-L-glutamate. The polypeptide is Acetylglutamate kinase (Nitrosococcus oceani (strain ATCC 19707 / BCRC 17464 / JCM 30415 / NCIMB 11848 / C-107)).